The primary structure comprises 1606 residues: Phosphatidylinositol 3,4,5-trisphosphate-dependent Rac exchanger 2 protein (1606 aa).

Positions 23–214 (LRVCVLSELQ…KAVCSNINEA (192 aa)) constitute a DH domain. In terms of domain architecture, PH spans 245–361 (EMLMCGVLLK…WFEAILKERE (117 aa)). DEP domains are found at residues 390–464 (CRQG…RFRY) and 491–566 (SLFT…FFSD). 2 PDZ domains span residues 592 to 671 (KSLL…VLVS) and 677 to 754 (TVKI…QDSI). The tract at residues 1581–1606 (GVRDRTPQSAPRLYKLCEPPPPAGEE) is disordered.

As to quaternary structure, interacts with RAC1. Isoform 1 is highly expressed in skeletal muscle, heart and placenta, absent from peripheral blood leukocytes. Isoform 2 is expressed in skeletal muscle, kidney, small intestine, and placenta. Isoform 3 is expressed in the heart.

Functions as a RAC1 guanine nucleotide exchange factor (GEF), activating Rac proteins by exchanging bound GDP for free GTP. Its activity is synergistically activated by phosphatidylinositol 3,4,5-trisphosphate and the beta gamma subunits of heterotrimeric G protein. Mediates the activation of RAC1 in a PI3K-dependent manner. May be an important mediator of Rac signaling, acting directly downstream of both G protein-coupled receptors and phosphoinositide 3-kinase. In Homo sapiens (Human), this protein is Phosphatidylinositol 3,4,5-trisphosphate-dependent Rac exchanger 2 protein.